Consider the following 393-residue polypeptide: Acetate kinase (393 aa).

Asn7 is a binding site for Mg(2+). Residue Lys14 coordinates ATP. Arg90 is a binding site for substrate. Residue Asp147 is the Proton donor/acceptor of the active site. Residues His205 to Gly209, Asp280 to Arg282, and Gly328 to Asn332 each bind ATP. Mg(2+) is bound at residue Glu380.

The protein belongs to the acetokinase family. Homodimer. Mg(2+) is required as a cofactor. It depends on Mn(2+) as a cofactor.

The protein localises to the cytoplasm. It carries out the reaction acetate + ATP = acetyl phosphate + ADP. The protein operates within metabolic intermediate biosynthesis; acetyl-CoA biosynthesis; acetyl-CoA from acetate: step 1/2. Its function is as follows. Catalyzes the formation of acetyl phosphate from acetate and ATP. Can also catalyze the reverse reaction. The sequence is that of Acetate kinase from Finegoldia magna (strain ATCC 29328 / DSM 20472 / WAL 2508) (Peptostreptococcus magnus).